The following is a 248-amino-acid chain: Triosephosphate isomerase (248 aa).

Residues Asn-11 and Lys-13 each contribute to the substrate site. Catalysis depends on His-95, which acts as the Electrophile. Residue Glu-165 is the Proton acceptor of the active site.

Belongs to the triosephosphate isomerase family. In terms of assembly, homodimer.

It is found in the cytoplasm. It catalyses the reaction dihydroxyacetone phosphate = methylglyoxal + phosphate. The catalysed reaction is D-glyceraldehyde 3-phosphate = dihydroxyacetone phosphate. It participates in carbohydrate degradation; glycolysis; D-glyceraldehyde 3-phosphate from glycerone phosphate: step 1/1. It functions in the pathway carbohydrate biosynthesis; gluconeogenesis. Functionally, triosephosphate isomerase is an extremely efficient metabolic enzyme that catalyzes the interconversion between dihydroxyacetone phosphate (DHAP) and D-glyceraldehyde-3-phosphate (G3P) in glycolysis and gluconeogenesis. Its function is as follows. It is also responsible for the non-negligible production of methylglyoxal a reactive cytotoxic side-product that modifies and can alter proteins, DNA and lipids. The polypeptide is Triosephosphate isomerase (tpi1) (Xenopus laevis (African clawed frog)).